A 943-amino-acid chain; its full sequence is Isoleucine--tRNA ligase (943 aa).

The 'HIGH' region signature appears at 59–69 (PYANGQIHLGH). L-isoleucyl-5'-AMP is bound at residue Glu577. The 'KMSKS' region signature appears at 618-622 (KMSKS). Lys621 contributes to the ATP binding site. Zn(2+)-binding residues include Cys906, Cys909, Cys926, and Cys929.

Belongs to the class-I aminoacyl-tRNA synthetase family. IleS type 1 subfamily. In terms of assembly, monomer. Zn(2+) is required as a cofactor.

It is found in the cytoplasm. The catalysed reaction is tRNA(Ile) + L-isoleucine + ATP = L-isoleucyl-tRNA(Ile) + AMP + diphosphate. In terms of biological role, catalyzes the attachment of isoleucine to tRNA(Ile). As IleRS can inadvertently accommodate and process structurally similar amino acids such as valine, to avoid such errors it has two additional distinct tRNA(Ile)-dependent editing activities. One activity is designated as 'pretransfer' editing and involves the hydrolysis of activated Val-AMP. The other activity is designated 'posttransfer' editing and involves deacylation of mischarged Val-tRNA(Ile). This chain is Isoleucine--tRNA ligase, found in Xylella fastidiosa (strain M23).